Consider the following 464-residue polypeptide: Formin-like protein 19 (464 aa).

The disordered stretch occupies residues 1–74; that stretch reads MSLVDISGAY…PRPCSRPPKT (74 aa). Residues 14–70 show a composition bias toward pro residues; it reads PLPPPPPPLMRRRAPLPPPPPPPLMRRRAPPPPPPPLMRRRAPPPPPPPPLPRPCSR. An FH2 domain is found at 68–462; the sequence is CSRPPKTKCS…KAAKEAEMEK (395 aa).

The protein belongs to the formin-like family. Class-II subfamily.

The protein is Formin-like protein 19 (FH19) of Arabidopsis thaliana (Mouse-ear cress).